The chain runs to 345 residues: Transcription factor MYB106 (345 aa).

2 HTH myb-type domains span residues K9 to L61 and R62 to L116. 2 DNA-binding regions (H-T-H motif) span residues W37–L61 and W89–L112.

Expressed in trichomes, stems, carpels, petals and stamens.

It localises to the nucleus. Functionally, functions as a repressor of epidermal cell outgrowth and negatively regulate trichome branch formation. Acts both as a positive and a negative regulator of cellular outgrowth. Promotes both trichome expansion and branch formation. Coordinately with WIN1/SHN1, participates in the regulation of cuticle biosynthesis and wax accumulation in reproductive organs and trichomes. Functions in cuticle nanoridge formation in petals and stamens, and in morphogenesis of petal conical cells and trichomes. May play a role in the regulation of cuticle formation in vegetative organs. The protein is Transcription factor MYB106 of Arabidopsis thaliana (Mouse-ear cress).